An 838-amino-acid chain; its full sequence is Sec1 family domain-containing protein MIP3 (838 aa).

Positions 637–677 are disordered; the sequence is KSEETKEIPSDDQLDIDALDDDPWGKWGDEEEEEVDNSKAD. Residues 646-658 are compositionally biased toward acidic residues; sequence SDDQLDIDALDDD.

It belongs to the STXBP/unc-18/SEC1 family. In terms of assembly, forms a complex with MAG2, ZW10/MIP1 and MIP2 on the endoplasmic reticulum.

Its subcellular location is the endoplasmic reticulum membrane. Functionally, required for proper maturation of seed storage proteins. Forms a complex with MAG2, ZW10/MIP1 and MIP2 on the endoplasmic reticulum that may be responsible for efficient transport of seed storage proteins. The protein is Sec1 family domain-containing protein MIP3 of Arabidopsis thaliana (Mouse-ear cress).